The chain runs to 135 residues: Large ribosomal subunit protein mL41 (135 aa).

The transit peptide at 1–13 directs the protein to the mitochondrion; it reads MGFLTAVTQGLVR.

The protein belongs to the mitochondrion-specific ribosomal protein mL41 family. In terms of assembly, component of the mitochondrial ribosome large subunit (39S) which comprises a 16S rRNA and about 50 distinct proteins. Interacts with BCL2.

Its subcellular location is the mitochondrion. In terms of biological role, component of the mitochondrial ribosome large subunit. Also involved in apoptosis and cell cycle. Enhances p53/TP53 stability, thereby contributing to p53/TP53-induced apoptosis in response to growth-inhibitory condition. Enhances p53/TP53 translocation to the mitochondria. Has the ability to arrest the cell cycle at the G1 phase, possibly by stabilizing the CDKN1A and CDKN1B (p27Kip1) proteins. This chain is Large ribosomal subunit protein mL41 (Mrpl41), found in Mus musculus (Mouse).